The chain runs to 116 residues: Urease subunit beta (116 aa).

Positions 97–116 are disordered; that stretch reads IQGPLDAGTAETAPGLPQQP.

Belongs to the urease beta subunit family. As to quaternary structure, heterotrimer of UreA (gamma), UreB (beta) and UreC (alpha) subunits. Three heterotrimers associate to form the active enzyme.

Its subcellular location is the cytoplasm. It catalyses the reaction urea + 2 H2O + H(+) = hydrogencarbonate + 2 NH4(+). Its pathway is nitrogen metabolism; urea degradation; CO(2) and NH(3) from urea (urease route): step 1/1. The chain is Urease subunit beta from Paracidovorax citrulli (strain AAC00-1) (Acidovorax citrulli).